Reading from the N-terminus, the 67-residue chain is Probable Sec-independent protein translocase protein TatE (67 aa).

A helical membrane pass occupies residues 4–21; it reads ISITKLLVVAALVVLLFG.

It belongs to the TatA/E family. TatE subfamily.

The protein resides in the cell inner membrane. In terms of biological role, part of the twin-arginine translocation (Tat) system that transports large folded proteins containing a characteristic twin-arginine motif in their signal peptide across membranes. TatE shares overlapping functions with TatA. The sequence is that of Probable Sec-independent protein translocase protein TatE from Shigella flexneri.